We begin with the raw amino-acid sequence, 1046 residues long: UDP-N-acetylglucosamine--peptide N-acetylglucosaminyltransferase 110 kDa subunit (1046 aa).

A2 carries the N-acetylalanine modification. Phosphoserine; by GSK3-beta; alternate occurs at positions 3 and 4. Residues S3 and S4 are each glycosylated (O-linked (GlcNAc) serine; alternate). A Phosphoserine modification is found at S20. TPR repeat units lie at residues 21–54 (FQGL…EPDN), 89–122 (AEAY…KPDF), 123–156 (IDGY…NPDL), 157–190 (YCVR…QPNF), 191–224 (AVAW…DPNF), 225–258 (LDAY…SPNH), 259–292 (AVVH…QPHF), 293–326 (PDAY…CPTH), 327–360 (ADSL…FPEF), 361–394 (AAAH…SPTF), 395–428 (ADAY…NPAF), and 429–462 (ADAH…KPDF). S399 is a glycosylation site (O-linked (GlcNAc) serine; by autocatalysis). At T454 the chain carries Phosphothreonine. A TPR 13; truncated repeat occupies 463 to 473 (PDAYCNLAHCL). The DFP motif signature appears at 464-466 (DAY). A Nuclear localization signal motif is present at residues 487-503 (KKLVSIVADQLEKNRLP). H508 acts as the Proton acceptor in catalysis. UDP contacts are provided by residues Q849, K852, 906-908 (APK), 911-914 (HVRR), 930-932 (HTT), and D935. The residue at position 989 (Y989) is a Phosphotyrosine. Residues 991 to 1010 (KKIRGKVWKQRISSPLFNTK) form a required for phosphatidylinositol 3,4,5-triphosphate binding region.

Belongs to the glycosyltransferase 41 family. O-GlcNAc transferase subfamily. In terms of assembly, monomer; may exist in different oligomerization states in cells. Homotrimer, oligomerizes via TPR repeats 6 and 7. Trimerization is not necessary for activity in vitro, however it increases affinity for UDP-GlcNAc. Component of a THAP1/THAP3-HCFC1-OGT complex. Component of the NSL complex at least composed of MOF/KAT8, KANSL1, KANSL2, KANSL3, MCRS1, PHF20, OGT1/OGT, WDR5 and HCFC1. Found in a complex with KIF5B, RHOT1, RHOT2 and TRAK1. Found in a complex composed of at least SINHCAF, SIN3A, HDAC1, SAP30, RBBP4, OGT and TET1. Component of a complex composed of KMT2E/MLL5, OGT and USP7; the complex stabilizes KMT2E/MLL5, preventing KMT2E/MLL5 ubiquitination and proteasomal-mediated degradation. Interacts (via TPRs 1-6) with SIN3A; the interaction mediates transcriptional repression in parallel with histone deacetylase. Interacts (via TPR 5-6) with TET1, TET2 and TET3. Interacts (via TPR repeats 6 and 7) with ATXN10. Interacts with NSD2. Interacts with PROSER1; this interaction mediates TET2 O-GlcNAcylation and stability by promoting the interaction between OGT and TET2. In terms of processing, ubiquitinated by the SCF(FBXO31) complex, leading to its proteasomal degradation. Phosphorylation on Ser-3 or Ser-4 by GSK3-beta positively regulates its activity. Phosphorylation at Thr-454 by AMPK promotes nuclear localization. Post-translationally, glycosylated via autocatalysis; O-GlcNAcylation at Ser-399 promotes nuclear localization.

The protein localises to the nucleus. The protein resides in the cytoplasm. The catalysed reaction is L-seryl-[protein] + UDP-N-acetyl-alpha-D-glucosamine = 3-O-(N-acetyl-beta-D-glucosaminyl)-L-seryl-[protein] + UDP + H(+). It carries out the reaction L-threonyl-[protein] + UDP-N-acetyl-alpha-D-glucosamine = 3-O-(N-acetyl-beta-D-glucosaminyl)-L-threonyl-[protein] + UDP + H(+). Its pathway is protein modification; protein glycosylation. With respect to regulation, inhibited by UDP. In terms of biological role, catalyzes the transfer of a single N-acetylglucosamine from UDP-GlcNAc to a serine or threonine residue in cytoplasmic and nuclear proteins resulting in their modification with a beta-linked N-acetylglucosamine (O-GlcNAc). Glycosylates a large and diverse number of proteins including histone H2B, AKT1, AMPK, ATG4B, CAPRIN1, EZH2, FNIP1, GSDMD, KRT7, LMNA, LMNB1, LMNB2, RPTOR, HOXA1, PFKL, KMT2E/MLL5, MAPT/TAU, TET2, RBL2, RET, NOD2 and HCFC1. Can regulate their cellular processes via cross-talk between glycosylation and phosphorylation or by affecting proteolytic processing. Involved in insulin resistance in muscle and adipocyte cells via glycosylating insulin signaling components and inhibiting the 'Thr-308' phosphorylation of AKT1, enhancing IRS1 phosphorylation and attenuating insulin signaling. Involved in glycolysis regulation by mediating glycosylation of 6-phosphofructokinase PFKL, inhibiting its activity. Plays a key role in chromatin structure by mediating O-GlcNAcylation of 'Ser-112' of histone H2B: recruited to CpG-rich transcription start sites of active genes via its interaction with TET proteins (TET1, TET2 or TET3). As part of the NSL complex indirectly involved in acetylation of nucleosomal histone H4 on several lysine residues. O-GlcNAcylation of 'Ser-75' of EZH2 increases its stability, and facilitating the formation of H3K27me3 by the PRC2/EED-EZH2 complex. Stabilizes KMT2E/MLL5 by mediating its glycosylation, thereby preventing KMT2E/MLL5 ubiquitination. Regulates circadian oscillation of the clock genes and glucose homeostasis in the liver. Stabilizes clock proteins BMAL1 and CLOCK through O-glycosylation, which prevents their ubiquitination and subsequent degradation. Promotes the CLOCK-BMAL1-mediated transcription of genes in the negative loop of the circadian clock such as PER1/2 and CRY1/2. O-glycosylates HCFC1 and regulates its proteolytic processing and transcriptional activity. Component of a THAP1/THAP3-HCFC1-OGT complex that is required for the regulation of the transcriptional activity of RRM1. Regulates mitochondrial motility in neurons by mediating glycosylation of TRAK1. Promotes autophagy by mediating O-glycosylation of ATG4B. Acts as a regulator of mTORC1 signaling by mediating O-glycosylation of RPTOR and FNIP1: O-GlcNAcylation of RPTOR in response to glucose sufficiency promotes activation of the mTORC1 complex. Functionally, catalyzes the transfer of a single N-acetylglucosamine from UDP-GlcNAc to a serine or threonine residue. Acts on cytoplasmic and nuclear proteins resulting in their modification with a beta-linked N-acetylglucosamine (O-GlcNAc). Glycosylates a large and diverse number of proteins including histone H2B, AKT1, ATG4B, EZH2, PFKL, KMT2E/MLL5, MAPT/TAU, NOD2 and HCFC1. Can regulate their cellular processes via cross-talk between glycosylation and phosphorylation or by affecting proteolytic processing. Probably by glycosylating KMT2E/MLL5, stabilizes KMT2E/MLL5 by preventing its ubiquitination. Involved in insulin resistance in muscle and adipocyte cells via glycosylating insulin signaling components and inhibiting the 'Thr-308' phosphorylation of AKT1, enhancing IRS1 phosphorylation and attenuating insulin signaling. Involved in glycolysis regulation by mediating glycosylation of 6-phosphofructokinase PFKL, inhibiting its activity. Component of a THAP1/THAP3-HCFC1-OGT complex that is required for the regulation of the transcriptional activity of RRM1. Plays a key role in chromatin structure by mediating O-GlcNAcylation of 'Ser-112' of histone H2B: recruited to CpG-rich transcription start sites of active genes via its interaction with TET proteins (TET1, TET2 or TET3). As part of the NSL complex indirectly involved in acetylation of nucleosomal histone H4 on several lysine residues. O-GlcNAcylation of 'Ser-75' of EZH2 increases its stability, and facilitating the formation of H3K27me3 by the PRC2/EED-EZH2 complex. Regulates circadian oscillation of the clock genes and glucose homeostasis in the liver. Stabilizes clock proteins BMAL1 and CLOCK through O-glycosylation, which prevents their ubiquitination and subsequent degradation. Promotes the CLOCK-BMAL1-mediated transcription of genes in the negative loop of the circadian clock such as PER1/2 and CRY1/2. O-glycosylates HCFC1 and regulates its proteolytic processing and transcriptional activity. Regulates mitochondrial motility in neurons by mediating glycosylation of TRAK1. Glycosylates HOXA1. O-glycosylates FNIP1. Promotes autophagy by mediating O-glycosylation of ATG4B. The chain is UDP-N-acetylglucosamine--peptide N-acetylglucosaminyltransferase 110 kDa subunit (OGT) from Oryctolagus cuniculus (Rabbit).